Reading from the N-terminus, the 281-residue chain is ATP phosphoribosyltransferase (281 aa).

This sequence belongs to the ATP phosphoribosyltransferase family. Long subfamily. Requires Mg(2+) as cofactor.

Its subcellular location is the cytoplasm. It catalyses the reaction 1-(5-phospho-beta-D-ribosyl)-ATP + diphosphate = 5-phospho-alpha-D-ribose 1-diphosphate + ATP. It participates in amino-acid biosynthesis; L-histidine biosynthesis; L-histidine from 5-phospho-alpha-D-ribose 1-diphosphate: step 1/9. Feedback inhibited by histidine. Its function is as follows. Catalyzes the condensation of ATP and 5-phosphoribose 1-diphosphate to form N'-(5'-phosphoribosyl)-ATP (PR-ATP). Has a crucial role in the pathway because the rate of histidine biosynthesis seems to be controlled primarily by regulation of HisG enzymatic activity. The protein is ATP phosphoribosyltransferase of Kocuria rhizophila (strain ATCC 9341 / DSM 348 / NBRC 103217 / DC2201).